The sequence spans 391 residues: Chalcone synthase 2 (391 aa).

Cysteine 164 is a catalytic residue.

This sequence belongs to the thiolase-like superfamily. Chalcone/stilbene synthases family.

It catalyses the reaction (E)-4-coumaroyl-CoA + 3 malonyl-CoA + 3 H(+) = 2',4,4',6'-tetrahydroxychalcone + 3 CO2 + 4 CoA. The protein operates within secondary metabolite biosynthesis; flavonoid biosynthesis. Functionally, the primary product of this enzyme is 4,2',4',6'-tetrahydroxychalcone (also termed naringenin-chalcone or chalcone) which can under specific conditions spontaneously isomerize into naringenin. The protein is Chalcone synthase 2 (CHS2) of Citrus sinensis (Sweet orange).